We begin with the raw amino-acid sequence, 352 residues long: Holliday junction branch migration complex subunit RuvB (352 aa).

The tract at residues 13–201 (IPRSRKELRL…FGLCHKIEFY (189 aa)) is large ATPase domain (RuvB-L). ATP-binding positions include L37, R41, G82, K85, T86, T87, 148–150 (EDF), R191, Y201, and R238. Position 86 (T86) interacts with Mg(2+). A small ATPAse domain (RuvB-S) region spans residues 202-273 (SNDELKQIIF…IIEKALDSQK (72 aa)). A head domain (RuvB-H) region spans residues 276–352 (NRGLDNVDRK…KYISSNNEKY (77 aa)). Residues R330 and R335 each coordinate DNA.

The protein belongs to the RuvB family. As to quaternary structure, homohexamer. Forms an RuvA(8)-RuvB(12)-Holliday junction (HJ) complex. HJ DNA is sandwiched between 2 RuvA tetramers; dsDNA enters through RuvA and exits via RuvB. An RuvB hexamer assembles on each DNA strand where it exits the tetramer. Each RuvB hexamer is contacted by two RuvA subunits (via domain III) on 2 adjacent RuvB subunits; this complex drives branch migration. In the full resolvosome a probable DNA-RuvA(4)-RuvB(12)-RuvC(2) complex forms which resolves the HJ.

The protein localises to the cytoplasm. It carries out the reaction ATP + H2O = ADP + phosphate + H(+). The RuvA-RuvB-RuvC complex processes Holliday junction (HJ) DNA during genetic recombination and DNA repair, while the RuvA-RuvB complex plays an important role in the rescue of blocked DNA replication forks via replication fork reversal (RFR). RuvA specifically binds to HJ cruciform DNA, conferring on it an open structure. The RuvB hexamer acts as an ATP-dependent pump, pulling dsDNA into and through the RuvAB complex. RuvB forms 2 homohexamers on either side of HJ DNA bound by 1 or 2 RuvA tetramers; 4 subunits per hexamer contact DNA at a time. Coordinated motions by a converter formed by DNA-disengaged RuvB subunits stimulates ATP hydrolysis and nucleotide exchange. Immobilization of the converter enables RuvB to convert the ATP-contained energy into a lever motion, pulling 2 nucleotides of DNA out of the RuvA tetramer per ATP hydrolyzed, thus driving DNA branch migration. The RuvB motors rotate together with the DNA substrate, which together with the progressing nucleotide cycle form the mechanistic basis for DNA recombination by continuous HJ branch migration. Branch migration allows RuvC to scan DNA until it finds its consensus sequence, where it cleaves and resolves cruciform DNA. The protein is Holliday junction branch migration complex subunit RuvB of Prochlorococcus marinus (strain MIT 9515).